Consider the following 394-residue polypeptide: Nuclear hormone receptor family member nhr-103 (394 aa).

A DNA-binding region (nuclear receptor) is located at residues 8 to 83; the sequence is SGPCEICGQK…VGMDSKKFQT (76 aa). An NR C4-type zinc finger spans residues 11-31; it reads CEICGQKTSGRHFGVLSCRSC. The NR C4-type; degenerate zinc finger occupies 47 to 66; that stretch reads QCVKGTCKIFEDGKFNCKQC. The NR LBD domain occupies 126–394; sequence YLVDMAKNLL…FSHPEMFETT (269 aa).

Belongs to the nuclear hormone receptor family.

The protein resides in the nucleus. In terms of biological role, orphan nuclear receptor. The chain is Nuclear hormone receptor family member nhr-103 (nhr-103) from Caenorhabditis elegans.